A 302-amino-acid polypeptide reads, in one-letter code: Riboflavin transporter (302 aa).

The next 8 membrane-spanning stretches (helical) occupy residues 16–36 (AVVGALWMVLAGIAFSLLNVV), 44–64 (LAFPSASAAFWQYGFAFLFSL), 87–107 (VVLAALGVEAWVAGLAAVPIW), 109–129 (AIALVMTSPFFIILGARLFLG), 158–178 (IGWAALLPVLSALLWGASSLI), 191–213 (ITVWLLVLLTPINGGLALAAGFA), 227–247 (GLLTAVAQYFLTLAYAAADAA), and 264–284 (GWLFFGYAPAGYLWLGAALIL). EamA domains follow at residues 30–151 (FSLL…MIIL) and 170–291 (LLWG…LFIM).

Belongs to the drug/metabolite transporter (DMT) superfamily. 10 TMS drug/metabolite exporter (DME) (TC 2.A.7.3) family.

The protein resides in the cell membrane. In terms of biological role, transports riboflavin into the cell. Can also transport FMN and FAD. Required for normal nodule development during colonization of pea plant roots. In Rhizobium johnstonii (strain DSM 114642 / LMG 32736 / 3841) (Rhizobium leguminosarum bv. viciae), this protein is Riboflavin transporter.